The following is a 307-amino-acid chain: Mitochondrial glycine transporter (307 aa).

Solcar repeat units lie at residues 8–87 (PRNS…MRSS), 115–199 (LTMY…SKQL), and 221–305 (TSTT…LVKR). 6 helical membrane-spanning segments follow: residues 14–39 (LIGG…TRIQ), 62–88 (GTLP…RSSL), 121–146 (LLTG…VRYE), 174–197 (GFGA…EKSK), 225–251 (VNTT…KTRM), and 280–298 (GLSM…AWGI).

This sequence belongs to the mitochondrial carrier (TC 2.A.29) family. SLC25A38 subfamily.

It is found in the mitochondrion. Its subcellular location is the mitochondrion inner membrane. The catalysed reaction is glycine(in) = glycine(out). Functionally, mitochondrial glycine transporter that imports glycine into the mitochondrial matrix. Plays an important role in providing glycine for the first enzymatic step in heme biosynthesis, the condensation of glycine with succinyl-CoA to produce 5-aminolevulinate (ALA) in the mitochondrial matrix. This is Mitochondrial glycine transporter from Saccharomyces cerevisiae (strain ATCC 204508 / S288c) (Baker's yeast).